A 232-amino-acid polypeptide reads, in one-letter code: Phosphatidylserine decarboxylase proenzyme (232 aa).

The active-site Schiff-base intermediate with substrate; via pyruvic acid is the serine 190. Serine 190 is subject to Pyruvic acid (Ser); by autocatalysis.

Belongs to the phosphatidylserine decarboxylase family. PSD-A subfamily. Heterodimer of a large membrane-associated beta subunit and a small pyruvoyl-containing alpha subunit. Pyruvate is required as a cofactor. Is synthesized initially as an inactive proenzyme. Formation of the active enzyme involves a self-maturation process in which the active site pyruvoyl group is generated from an internal serine residue via an autocatalytic post-translational modification. Two non-identical subunits are generated from the proenzyme in this reaction, and the pyruvate is formed at the N-terminus of the alpha chain, which is derived from the carboxyl end of the proenzyme. The post-translation cleavage follows an unusual pathway, termed non-hydrolytic serinolysis, in which the side chain hydroxyl group of the serine supplies its oxygen atom to form the C-terminus of the beta chain, while the remainder of the serine residue undergoes an oxidative deamination to produce ammonia and the pyruvoyl prosthetic group on the alpha chain.

It localises to the cell membrane. The enzyme catalyses a 1,2-diacyl-sn-glycero-3-phospho-L-serine + H(+) = a 1,2-diacyl-sn-glycero-3-phosphoethanolamine + CO2. It functions in the pathway phospholipid metabolism; phosphatidylethanolamine biosynthesis; phosphatidylethanolamine from CDP-diacylglycerol: step 2/2. Its function is as follows. Catalyzes the formation of phosphatidylethanolamine (PtdEtn) from phosphatidylserine (PtdSer). This is Phosphatidylserine decarboxylase proenzyme from Bradyrhizobium sp. (strain BTAi1 / ATCC BAA-1182).